A 185-amino-acid polypeptide reads, in one-letter code: Ribosome-recycling factor (185 aa).

This sequence belongs to the RRF family.

It localises to the cytoplasm. Functionally, responsible for the release of ribosomes from messenger RNA at the termination of protein biosynthesis. May increase the efficiency of translation by recycling ribosomes from one round of translation to another. The protein is Ribosome-recycling factor of Finegoldia magna (strain ATCC 29328 / DSM 20472 / WAL 2508) (Peptostreptococcus magnus).